The chain runs to 496 residues: Glutamyl-tRNA(Gln) amidotransferase subunit A, mitochondrial (496 aa).

Residues K80 and S161 each act as charge relay system in the active site. S185 (acyl-ester intermediate) is an active-site residue.

Belongs to the amidase family. GatA subfamily. As to quaternary structure, subunit of the heterotrimeric GatCAB amidotransferase (AdT) complex, composed of A, B and C subunits.

It localises to the mitochondrion. The enzyme catalyses L-glutamyl-tRNA(Gln) + L-glutamine + ATP + H2O = L-glutaminyl-tRNA(Gln) + L-glutamate + ADP + phosphate + H(+). Allows the formation of correctly charged Gln-tRNA(Gln) through the transamidation of misacylated Glu-tRNA(Gln) in the mitochondria. The reaction takes place in the presence of glutamine and ATP through an activated gamma-phospho-Glu-tRNA(Gln). This chain is Glutamyl-tRNA(Gln) amidotransferase subunit A, mitochondrial, found in Culex quinquefasciatus (Southern house mosquito).